The sequence spans 406 residues: Argininosuccinate synthase (406 aa).

ATP is bound by residues Ala11–Ser19 and Ala38. Residues Tyr91 and Ser96 each contribute to the L-citrulline site. Gly121 provides a ligand contact to ATP. L-aspartate contacts are provided by Thr123, Asn127, and Asp128. Asn127 lines the L-citrulline pocket. Residues Arg131, Ser181, Ser190, Glu266, and Tyr278 each coordinate L-citrulline.

The protein belongs to the argininosuccinate synthase family. Type 1 subfamily. As to quaternary structure, homotetramer.

The protein resides in the cytoplasm. It carries out the reaction L-citrulline + L-aspartate + ATP = 2-(N(omega)-L-arginino)succinate + AMP + diphosphate + H(+). Its pathway is amino-acid biosynthesis; L-arginine biosynthesis; L-arginine from L-ornithine and carbamoyl phosphate: step 2/3. The protein is Argininosuccinate synthase of Campylobacter curvus (strain 525.92).